The chain runs to 386 residues: Flap endonuclease 1 (386 aa).

Residues 1–104 (MGILGLSKLI…GELAKRAERR (104 aa)) are N-domain. Mg(2+) is bound at residue aspartate 34. DNA-binding residues include arginine 47 and arginine 70. The Mg(2+) site is built by aspartate 86, glutamate 158, glutamate 160, aspartate 179, and aspartate 181. The interval 122 to 253 (EIEKFNRRLV…KRAIELINNY (132 aa)) is I-domain. Glutamate 158 serves as a coordination point for DNA. Residues glycine 231 and aspartate 233 each coordinate DNA. Mg(2+) is bound at residue aspartate 233. The tract at residues 336–344 (TQVRLDSFF) is interaction with PCNA. Residues 351–386 (PNAVHAAKRKAEEAKKSANNKKAKTSGGAARGRRPK) form a disordered region.

This sequence belongs to the XPG/RAD2 endonuclease family. FEN1 subfamily. Interacts with PCNA. Three molecules of FEN1 bind to one PCNA trimer with each molecule binding to one PCNA monomer. PCNA stimulates the nuclease activity without altering cleavage specificity. Mg(2+) serves as cofactor. Post-translationally, phosphorylated. Phosphorylation upon DNA damage induces relocalization to the nuclear plasma.

The protein resides in the nucleus. The protein localises to the nucleolus. Its subcellular location is the nucleoplasm. It is found in the mitochondrion. In terms of biological role, structure-specific nuclease with 5'-flap endonuclease and 5'-3' exonuclease activities involved in DNA replication and repair. During DNA replication, cleaves the 5'-overhanging flap structure that is generated by displacement synthesis when DNA polymerase encounters the 5'-end of a downstream Okazaki fragment. It enters the flap from the 5'-end and then tracks to cleave the flap base, leaving a nick for ligation. Also involved in the long patch base excision repair (LP-BER) pathway, by cleaving within the apurinic/apyrimidinic (AP) site-terminated flap. Acts as a genome stabilization factor that prevents flaps from equilibrating into structures that lead to duplications and deletions. Also possesses 5'-3' exonuclease activity on nicked or gapped double-stranded DNA, and exhibits RNase H activity. Also involved in replication and repair of rDNA and in repairing mitochondrial DNA. The polypeptide is Flap endonuclease 1 (Drosophila persimilis (Fruit fly)).